A 524-amino-acid polypeptide reads, in one-letter code: Phosphoenolpyruvate carboxykinase (ATP) (524 aa).

Substrate-binding residues include Arg-52, Tyr-188, and Lys-194. ATP contacts are provided by residues Lys-194, His-213, and 229–237 (GLSGTGKTT). Mn(2+) is bound by residues Lys-194 and His-213. Residue Asp-250 coordinates Mn(2+). Positions 278, 314, and 439 each coordinate ATP. Substrate is bound at residue Arg-314.

This sequence belongs to the phosphoenolpyruvate carboxykinase (ATP) family. Mn(2+) serves as cofactor.

The protein resides in the cytoplasm. The catalysed reaction is oxaloacetate + ATP = phosphoenolpyruvate + ADP + CO2. Its pathway is carbohydrate biosynthesis; gluconeogenesis. In terms of biological role, involved in the gluconeogenesis. Catalyzes the conversion of oxaloacetate (OAA) to phosphoenolpyruvate (PEP) through direct phosphoryl transfer between the nucleoside triphosphate and OAA. The chain is Phosphoenolpyruvate carboxykinase (ATP) from Campylobacter jejuni subsp. jejuni serotype O:23/36 (strain 81-176).